Here is a 346-residue protein sequence, read N- to C-terminus: MSTVAAYAAMSATEPLTKTTITRRDPGPHDVAIDIKFAGICHSDIHTVKAEWGQPNYPVVPGHEIAGVVTAVGSEVTKYRQGDRVGVGCFVDSCRECNSCTRGIEQYCKPGANFTYNSIGKDGQPTQGGYSEAIVVDENYVLRIPDVLPLDVAAPLLCAGITLYSPLRHWNAGANTRVAIIGLGGLGHMGVKLGAAMGADVTVLSQSLKKMEDGLRLGAKSYYATADPDTFRKLRGGFDLILNTVSANLDLGQYLNLLDVDGTLVELGIPEHPMAVPAFALALMRRSLAGSNIGGIAETQEMLNFCAEHGVTPEIELIEPDYINDAYERVLASDVRYRFVIDISAL.

Residues Cys-41, His-63, Cys-94, Cys-97, Cys-100, Cys-108, and Cys-158 each contribute to the Zn(2+) site.

Belongs to the zinc-containing alcohol dehydrogenase family. Zn(2+) is required as a cofactor.

The catalysed reaction is a primary alcohol + NADP(+) = an aldehyde + NADPH + H(+). This Mycobacterium bovis (strain ATCC BAA-935 / AF2122/97) protein is NADP-dependent alcohol dehydrogenase C (adhC).